Consider the following 339-residue polypeptide: Phosphate acyltransferase (339 aa).

This sequence belongs to the PlsX family. As to quaternary structure, homodimer. Probably interacts with PlsY.

It is found in the cytoplasm. The catalysed reaction is a fatty acyl-[ACP] + phosphate = an acyl phosphate + holo-[ACP]. It participates in lipid metabolism; phospholipid metabolism. Catalyzes the reversible formation of acyl-phosphate (acyl-PO(4)) from acyl-[acyl-carrier-protein] (acyl-ACP). This enzyme utilizes acyl-ACP as fatty acyl donor, but not acyl-CoA. The protein is Phosphate acyltransferase of Methylococcus capsulatus (strain ATCC 33009 / NCIMB 11132 / Bath).